A 359-amino-acid polypeptide reads, in one-letter code: Alpha-2-HS-glycoprotein (359 aa).

A signal peptide spans 1-18 (MKSFVLLFCLAQLWGCHS). Positions 27 to 133 (YKEPACDDPD…QFSVLFTKCD (107 aa)) constitute a Cystatin fetuin-A-type 1 domain. 6 disulfides stabilise this stretch: Cys-32–Cys-350, Cys-89–Cys-100, Cys-114–Cys-132, Cys-146–Cys-149, Cys-208–Cys-219, and Cys-230–Cys-248. N-linked (GlcNAc...) asparagine glycosylation occurs at Asn-99. A phosphoserine mark is found at Ser-134, Ser-135, and Ser-138. Residues 144-256 (KLCPDCPLLA…TCTLFQTQPV (113 aa)) enclose the Cystatin fetuin-A-type 2 domain. Residues Asn-156 and Asn-176 are each glycosylated (N-linked (GlcNAc...) asparagine). Residues 257–285 (IPQPQPDGAEAEAPSAVPDAAGPTPSAAG) form a disordered region. O-linked (GalNAc...) serine glycosylation is present at Ser-271. Positions 276-285 (AAGPTPSAAG) are enriched in low complexity. O-linked (GalNAc...) threonine glycosylation occurs at Thr-280. 2 O-linked (GalNAc...) serine glycosylation sites follow: Ser-282 and Ser-296. Position 314 is a phosphothreonine (Thr-314). A phosphoserine mark is found at Ser-316, Ser-320, Ser-323, and Ser-325. Thr-334 carries O-linked (GalNAc...) threonine glycosylation. O-linked (GalNAc...) serine; partial glycosylation occurs at Ser-341.

It belongs to the fetuin family. Post-translationally, phosphorylated by FAM20C in the extracellular medium. Liver and bone.

Its subcellular location is the secreted. Promotes endocytosis, possesses opsonic properties and influences the mineral phase of bone. Suggested to have lymphocyte stimulating properties, lipid binding capability and to bind thyroid hormone. The chain is Alpha-2-HS-glycoprotein (AHSG) from Bos taurus (Bovine).